Consider the following 273-residue polypeptide: NH(3)-dependent NAD(+) synthetase (273 aa).

34–41 provides a ligand contact to ATP; the sequence is GLSGGIDS. Mg(2+) is bound at residue aspartate 40. Residue arginine 116 coordinates deamido-NAD(+). An ATP-binding site is contributed by threonine 136. Mg(2+) is bound at residue glutamate 141. Positions 165 and 187 each coordinate ATP.

This sequence belongs to the NAD synthetase family. As to quaternary structure, homodimer.

The enzyme catalyses deamido-NAD(+) + NH4(+) + ATP = AMP + diphosphate + NAD(+) + H(+). Its pathway is cofactor biosynthesis; NAD(+) biosynthesis; NAD(+) from deamido-NAD(+) (ammonia route): step 1/1. In terms of biological role, catalyzes the ATP-dependent amidation of deamido-NAD to form NAD. Uses ammonia as a nitrogen source. In Trichlorobacter lovleyi (strain ATCC BAA-1151 / DSM 17278 / SZ) (Geobacter lovleyi), this protein is NH(3)-dependent NAD(+) synthetase.